The chain runs to 315 residues: Cytosolic Fe-S cluster assembly factor nubp1-A (315 aa).

A disordered region spans residues 1–23 (MADIPDNAPQHCPGTDSTEAGKS). Residues Cys12, Cys26, Cys29, and Cys35 each contribute to the [4Fe-4S] cluster site. 66–73 (GKGGVGKS) provides a ligand contact to ATP. Cys239 and Cys242 together coordinate [4Fe-4S] cluster.

The protein belongs to the Mrp/NBP35 ATP-binding proteins family. NUBP1/NBP35 subfamily. In terms of assembly, heterotetramer of 2 nubp1 and 2 nubp2 chains. Requires [4Fe-4S] cluster as cofactor.

Its subcellular location is the cytoplasm. In terms of biological role, component of the cytosolic iron-sulfur (Fe/S) protein assembly (CIA) machinery. Required for maturation of extramitochondrial Fe-S proteins. The nubp1-nubp2 heterotetramer forms a Fe-S scaffold complex, mediating the de novo assembly of an Fe-S cluster and its transfer to target apoproteins. The protein is Cytosolic Fe-S cluster assembly factor nubp1-A (nubp1-A) of Xenopus laevis (African clawed frog).